A 258-amino-acid chain; its full sequence is 5'-nucleotidase SurE (258 aa).

A divalent metal cation-binding residues include aspartate 8, aspartate 9, serine 40, and asparagine 92.

It belongs to the SurE nucleotidase family. A divalent metal cation is required as a cofactor.

It localises to the cytoplasm. It catalyses the reaction a ribonucleoside 5'-phosphate + H2O = a ribonucleoside + phosphate. Its function is as follows. Nucleotidase that shows phosphatase activity on nucleoside 5'-monophosphates. This chain is 5'-nucleotidase SurE, found in Brucella anthropi (strain ATCC 49188 / DSM 6882 / CCUG 24695 / JCM 21032 / LMG 3331 / NBRC 15819 / NCTC 12168 / Alc 37) (Ochrobactrum anthropi).